Consider the following 231-residue polypeptide: LexA repressor (231 aa).

A DNA-binding region (H-T-H motif) is located at residues 26-46 (FEEMKEALDLKSKSGIHRLIG). Catalysis depends on for autocatalytic cleavage activity residues Ser152 and Lys190.

This sequence belongs to the peptidase S24 family. Homodimer.

It carries out the reaction Hydrolysis of Ala-|-Gly bond in repressor LexA.. In terms of biological role, represses a number of genes involved in the response to DNA damage (SOS response), including recA and lexA. In the presence of single-stranded DNA, RecA interacts with LexA causing an autocatalytic cleavage which disrupts the DNA-binding part of LexA, leading to derepression of the SOS regulon and eventually DNA repair. This is LexA repressor from Acidiphilium cryptum (strain JF-5).